A 464-amino-acid polypeptide reads, in one-letter code: Glutamate--tRNA ligase (464 aa).

Residues 9–19 carry the 'HIGH' region motif; that stretch reads PSPTGYLHIGG. A 'KMSKS' region motif is present at residues 242–246; sequence KISKR. Lysine 245 lines the ATP pocket.

This sequence belongs to the class-I aminoacyl-tRNA synthetase family. Glutamate--tRNA ligase type 1 subfamily. In terms of assembly, monomer.

It is found in the cytoplasm. It catalyses the reaction tRNA(Glu) + L-glutamate + ATP = L-glutamyl-tRNA(Glu) + AMP + diphosphate. In terms of biological role, catalyzes the attachment of glutamate to tRNA(Glu) in a two-step reaction: glutamate is first activated by ATP to form Glu-AMP and then transferred to the acceptor end of tRNA(Glu). The polypeptide is Glutamate--tRNA ligase (Neisseria meningitidis serogroup A / serotype 4A (strain DSM 15465 / Z2491)).